Here is a 367-residue protein sequence, read N- to C-terminus: Glutamate 5-kinase (367 aa).

Lys-10 provides a ligand contact to ATP. 3 residues coordinate substrate: Ser-50, Asp-137, and Asn-149. ATP-binding positions include 169–170 (TD) and 211–217 (TGGMGTK). Positions 275–353 (AGEITVDEGA…QQIDAILGYE (79 aa)) constitute a PUA domain.

This sequence belongs to the glutamate 5-kinase family.

It localises to the cytoplasm. The enzyme catalyses L-glutamate + ATP = L-glutamyl 5-phosphate + ADP. The protein operates within amino-acid biosynthesis; L-proline biosynthesis; L-glutamate 5-semialdehyde from L-glutamate: step 1/2. Functionally, catalyzes the transfer of a phosphate group to glutamate to form L-glutamate 5-phosphate. This Citrobacter koseri (strain ATCC BAA-895 / CDC 4225-83 / SGSC4696) protein is Glutamate 5-kinase.